The chain runs to 130 residues: Small ribosomal subunit protein uS8 (130 aa).

Belongs to the universal ribosomal protein uS8 family. In terms of assembly, part of the 30S ribosomal subunit.

Functionally, one of the primary rRNA binding proteins, it binds directly to 16S rRNA central domain where it helps coordinate assembly of the platform of the 30S subunit. This chain is Small ribosomal subunit protein uS8, found in Methanococcus voltae.